The chain runs to 330 residues: ADP-L-glycero-D-manno-heptose-6-epimerase (330 aa).

Residues 11 to 12 (FI), 32 to 33 (DN), Lys-39, Lys-54, 75 to 79 (EGACS), and Asn-92 contribute to the NADP(+) site. The active-site Proton acceptor is Tyr-139. Lys-143 serves as a coordination point for NADP(+). Asn-168 provides a ligand contact to substrate. Residues Val-169 and Lys-177 each coordinate NADP(+). The active-site Proton acceptor is the Lys-177. Residues Arg-179, His-186, 200–203 (FGEY), Arg-213, and Tyr-292 contribute to the substrate site.

The protein belongs to the NAD(P)-dependent epimerase/dehydratase family. HldD subfamily. Homopentamer. Requires NADP(+) as cofactor.

The catalysed reaction is ADP-D-glycero-beta-D-manno-heptose = ADP-L-glycero-beta-D-manno-heptose. It participates in nucleotide-sugar biosynthesis; ADP-L-glycero-beta-D-manno-heptose biosynthesis; ADP-L-glycero-beta-D-manno-heptose from D-glycero-beta-D-manno-heptose 7-phosphate: step 4/4. Its function is as follows. Catalyzes the interconversion between ADP-D-glycero-beta-D-manno-heptose and ADP-L-glycero-beta-D-manno-heptose via an epimerization at carbon 6 of the heptose. This is ADP-L-glycero-D-manno-heptose-6-epimerase from Burkholderia pseudomallei (strain K96243).